The following is a 291-amino-acid chain: Bifunctional protein FolD (291 aa).

NADP(+)-binding positions include 168–170 (GRG), T195, and I236.

This sequence belongs to the tetrahydrofolate dehydrogenase/cyclohydrolase family. As to quaternary structure, homodimer.

The catalysed reaction is (6R)-5,10-methylene-5,6,7,8-tetrahydrofolate + NADP(+) = (6R)-5,10-methenyltetrahydrofolate + NADPH. It catalyses the reaction (6R)-5,10-methenyltetrahydrofolate + H2O = (6R)-10-formyltetrahydrofolate + H(+). The protein operates within one-carbon metabolism; tetrahydrofolate interconversion. Functionally, catalyzes the oxidation of 5,10-methylenetetrahydrofolate to 5,10-methenyltetrahydrofolate and then the hydrolysis of 5,10-methenyltetrahydrofolate to 10-formyltetrahydrofolate. The protein is Bifunctional protein FolD of Bifidobacterium longum subsp. infantis (strain ATCC 15697 / DSM 20088 / JCM 1222 / NCTC 11817 / S12).